The chain runs to 395 residues: Zinc finger protein 385D (395 aa).

Residues 80 to 110 form a Matrin-type 1 zinc finger; it reads ISCNICQLRFNSDSQAAAHYKGTKHAKKLKA. The span at 169–193 shows a compositional bias: polar residues; sequence MTTEITSKVEKSPTTATGNSSCPST. Residues 169 to 194 form a disordered region; the sequence is MTTEITSKVEKSPTTATGNSSCPSTE. Matrin-type zinc fingers lie at residues 204 to 234 and 267 to 297; these read LYCS…MLEA and FHCE…RAAG. Positions 282-309 are disordered; the sequence is LKQHISSRRHKDRAAGKPPKPKYSPYNK.

The protein localises to the nucleus. In Homo sapiens (Human), this protein is Zinc finger protein 385D (ZNF385D).